A 194-amino-acid chain; its full sequence is Large ribosomal subunit protein bL9 (194 aa).

The tract at residues 169-194 (DDINDNARPENFFDPNAEFDGGEDNA) is disordered.

The protein belongs to the bacterial ribosomal protein bL9 family.

Functionally, binds to the 23S rRNA. The chain is Large ribosomal subunit protein bL9 from Mesorhizobium japonicum (strain LMG 29417 / CECT 9101 / MAFF 303099) (Mesorhizobium loti (strain MAFF 303099)).